We begin with the raw amino-acid sequence, 178 residues long: Nucleoside-triphosphatase THEP1 (178 aa).

ATP contacts are provided by residues 7–14 and 102–109; these read GEPGVGKT and VIIIDEIG.

Belongs to the THEP1 NTPase family. Monomer.

It catalyses the reaction a ribonucleoside 5'-triphosphate + H2O = a ribonucleoside 5'-diphosphate + phosphate + H(+). Its function is as follows. Has nucleotide phosphatase activity towards ATP, GTP, CTP, TTP and UTP. May hydrolyze nucleoside diphosphates with lower efficiency. Does not have kinase activity. The polypeptide is Nucleoside-triphosphatase THEP1 (Aquifex aeolicus (strain VF5)).